The primary structure comprises 275 residues: Phosphonates import ATP-binding protein PhnC (275 aa).

The region spanning 2 to 246 (LKIENLTKRY…ALTEIYGEEE (245 aa)) is the ABC transporter domain. 35–42 (GPSGAGKS) serves as a coordination point for ATP.

Belongs to the ABC transporter superfamily. Phosphonates importer (TC 3.A.1.9.1) family. As to quaternary structure, the complex is composed of two ATP-binding proteins (PhnC), two transmembrane proteins (PhnE) and a solute-binding protein (PhnD).

The protein localises to the cell inner membrane. The enzyme catalyses phosphonate(out) + ATP + H2O = phosphonate(in) + ADP + phosphate + H(+). Its function is as follows. Part of the ABC transporter complex PhnCDE involved in phosphonates import. Responsible for energy coupling to the transport system. The sequence is that of Phosphonates import ATP-binding protein PhnC from Wolinella succinogenes (strain ATCC 29543 / DSM 1740 / CCUG 13145 / JCM 31913 / LMG 7466 / NCTC 11488 / FDC 602W) (Vibrio succinogenes).